The primary structure comprises 582 residues: MLFGELAQYFEKIEKTTKRNEMMEILADLFKRVDKEEIEKIIYLLNGRVAPDYEKIEFGMSEKLVLRAMALALKVPIFDLEKVYKEVGDLGELIIKYSQNEGKDLTVVETFNTLFEIANLSGEGSVDAKVNRLAFLINSLTPQGGKYLVRIVLGKLRLGVGEPTVMDALSFAKVKDKSLRPFIERAFNITSDLGYVAKVFWEGGIEALKKIKVEVGKPIRMALAERVSKVEEIVKRLGKCAIEPKFDGFRCQIHKKENNVRIFSRNLEDNTHMFPDLVEAVLKQFSDKNVIIEGEAISYNPETGEFYPFQVTVQRKRKYNISEMVELYPLQLFAFDILYLNGEDITSLPYIRRRQKLEEAISEGEKIFVTKNIITNDPKEIQAFFEECITEGLEGIVAKRLDAPYQAGIRNFNWIKLKRSYQGHLADTVDCVILGYFKGRGHRAKFGIGALLVGVYDDERDLFKTVAKIGTGPTEEEWVRFREVLDEIKLESKPNNVESLIEPDVWVEPKYVVVIQADEITRSPVHTCGRELDGLGYALRFPRVIGFVREDKGPYDATTVKEILEMFRGQKKEKVEEDSDNL.

ATP is bound at residue glutamate 243. Lysine 245 functions as the N6-AMP-lysine intermediate in the catalytic mechanism. Positions 250, 265, 295, 335, 410, and 416 each coordinate ATP.

It belongs to the ATP-dependent DNA ligase family. Mg(2+) serves as cofactor.

The catalysed reaction is ATP + (deoxyribonucleotide)n-3'-hydroxyl + 5'-phospho-(deoxyribonucleotide)m = (deoxyribonucleotide)n+m + AMP + diphosphate.. DNA ligase that seals nicks in double-stranded DNA during DNA replication, DNA recombination and DNA repair. The chain is Probable DNA ligase from Dictyoglomus turgidum (strain DSM 6724 / Z-1310).